The chain runs to 69 residues: DNA gyrase inhibitor YacG (69 aa).

Residues Cys-12, Cys-15, Cys-31, and Cys-35 each coordinate Zn(2+). Residues 49–69 (RVPVEPKPDEGETPDQAERPQ) are disordered.

It belongs to the DNA gyrase inhibitor YacG family. Interacts with GyrB. Zn(2+) serves as cofactor.

Inhibits all the catalytic activities of DNA gyrase by preventing its interaction with DNA. Acts by binding directly to the C-terminal domain of GyrB, which probably disrupts DNA binding by the gyrase. The sequence is that of DNA gyrase inhibitor YacG from Thiobacillus denitrificans (strain ATCC 25259 / T1).